Here is a 1837-residue protein sequence, read N- to C-terminus: Zinc finger SWIM domain-containing protein 8 (1837 aa).

3 positions are modified to phosphoserine: serine 36, serine 48, and serine 53. The disordered stretch occupies residues 45–65 (RKQSAGPNSPTGGGGGGGSGG). The span at 55 to 65 (TGGGGGGGSGG) shows a compositional bias: gly residues. Residues 172–208 (YNVAVMFDRCRVTSCSCTCGAGAKWCTHVVALCLFRI) form an SWIM-type zinc finger. Serine 437 carries the post-translational modification Phosphoserine. 3 disordered regions span residues 514 to 727 (SRPG…EEDD), 803 to 823 (NPPDLKVEPPPAKGKKNKVST), and 1016 to 1232 (SQTH…VPNQ). Basic and acidic residues-rich tracts occupy residues 523–532 (GLEESRDRPR) and 566–575 (LSAEGGDKAL). Phosphoserine is present on serine 567. Over residues 579–602 (GPGGGKAKALGGAGSGSKGSAGGG) the composition is skewed to gly residues. The span at 1019 to 1040 (HKPQTLSSFYSSSRPTTASQRS) shows a compositional bias: polar residues. Over residues 1119-1130 (SRGGYNGRGWGS) the composition is skewed to gly residues. Residue threonine 1139 is modified to Phosphothreonine. Positions 1144 to 1159 (IDSSAPETTSDSSPTL) are enriched in polar residues. Residues serine 1153, serine 1156, and serine 1160 each carry the phosphoserine modification. Positions 1174-1209 (GRGQDSDSISSSSSDSLGSSSSSGSRRASASGGARA) are enriched in low complexity. Over residues 1210-1226 (KTVEVGRYKGRRPESHA) the composition is skewed to basic and acidic residues. Position 1267 is a phosphoserine (serine 1267). Disordered stretches follow at residues 1442–1464 (SASGIRAGGEAGRGMPEGRGGPG) and 1635–1656 (QPSPLVSGGFPPPEEETHSQPV). Residues 1447–1464 (RAGGEAGRGMPEGRGGPG) show a composition bias toward gly residues. At serine 1836 the chain carries Phosphoserine.

The protein belongs to the ZSWIM8 family. Component of the SCF-like E3 ubiquitin-protein ligase complex which contains CUL3, RBX1, ELOB, ELOC and ZSWIM8. As to quaternary structure, (Microbial infection) Interacts with Zika virus protein NS5; this interaction allows STAT2 binding and subsequent proteasomal degradation.

The protein localises to the cytoplasm. Its subcellular location is the cytosol. The protein operates within protein modification; protein ubiquitination. In terms of biological role, substrate recognition component of a SCF-like E3 ubiquitin-protein ligase complex that promotes target-directed microRNA degradation (TDMD), a process that mediates degradation of microRNAs (miRNAs). The SCF-like E3 ubiquitin-protein ligase complex acts by catalyzing ubiquitination and subsequent degradation of AGO proteins (AGO1, AGO2, AGO3 and/or AGO4), thereby exposing miRNAs for degradation. Specifically recognizes and binds AGO proteins when they are engaged with a TDMD target. May also act as a regulator of axon guidance: specifically recognizes misfolded ROBO3 and promotes its ubiquitination and subsequent degradation. Plays an essential role for proper embryonic development of heart and lung. Controls protein quality of DAB1, a key signal molecule for brain development, thus protecting its signaling strength. Mechanistically, recognizes intrinsically disordered regions of DAB1 and eliminates misfolded DAB1 that cannot be properly phosphorylated. Its function is as follows. (Microbial infection) Participates in Zika virus inhibition of IFN signaling by acting as a scaffold protein to connect ZSWIM8/CUL3 ligase complex and STAT2, leading to STAT2 degradation. The polypeptide is Zinc finger SWIM domain-containing protein 8 (Homo sapiens (Human)).